The primary structure comprises 101 residues: Small ribosomal subunit protein uS14 (101 aa).

Belongs to the universal ribosomal protein uS14 family. As to quaternary structure, part of the 30S ribosomal subunit. Contacts proteins S3 and S10.

In terms of biological role, binds 16S rRNA, required for the assembly of 30S particles and may also be responsible for determining the conformation of the 16S rRNA at the A site. This chain is Small ribosomal subunit protein uS14, found in Ruegeria pomeroyi (strain ATCC 700808 / DSM 15171 / DSS-3) (Silicibacter pomeroyi).